The sequence spans 1335 residues: Restriction of telomere capping protein 1 (1335 aa).

The disordered stretch occupies residues 1–39 (MSLSPHVENASIPKGSTPIPKNRNVSSIGKGEFLGSSSS). 6 WD repeats span residues 207-248 (NKFS…SIDN), 256-296 (EHTR…SKSS), 305-342 (TASD…YKFA), 367-406 (AHTG…NAAE), 439-486 (NTGY…IPKH), and 489-527 (LSET…TVLE). 5 disordered regions span residues 559 to 593 (PELQ…IGGI), 600 to 619 (TGLT…GPTF), 630 to 651 (ASSF…ENRE), 736 to 758 (KNAT…DDDD), and 783 to 824 (NEKV…DRSR). The segment covering 630–644 (ASSFNSSSASLTSLT) has biased composition (low complexity). Over residues 808–817 (SSISSISASR) the composition is skewed to low complexity. Residues 844 to 884 (LISIATHNASVYLSIDDLTNFKIWILIRDSLLWDLKWMTSS) form a WD 7 repeat. Disordered regions lie at residues 935-956 (AFRA…KLKE) and 1007-1037 (DEHE…KSIP). 2 stretches are compositionally biased toward basic and acidic residues: residues 945–956 (DAEKKPVSKLKE) and 1009–1021 (HEHQ…HDSP). Phosphoserine is present on residues Ser-1030, Ser-1074, Ser-1081, Ser-1083, Ser-1117, and Ser-1127. WD repeat units lie at residues 1130-1170 (REQL…TETG) and 1217-1256 (VLKY…KEKL). The RING-type; degenerate zinc finger occupies 1294 to 1335 (LKKLTMVILPCGHEGHFQCIQEWFLDENEQECPGGCPGVAFI).

Belongs to the WD repeat RTC1 family.

It is found in the vacuole. Its function is as follows. May be involved in a process influencing telomere capping. This chain is Restriction of telomere capping protein 1 (RTC1), found in Saccharomyces cerevisiae (strain YJM789) (Baker's yeast).